We begin with the raw amino-acid sequence, 676 residues long: DNA ligase (676 aa).

NAD(+)-binding positions include 32–36, 81–82, and Glu-113; these read DAEYD and SL. The active-site N6-AMP-lysine intermediate is the Lys-115. NAD(+) is bound by residues Arg-136, Glu-173, Lys-291, and Lys-315. 4 residues coordinate Zn(2+): Cys-409, Cys-412, Cys-427, and Cys-433. One can recognise a BRCT domain in the interval 595 to 676; the sequence is SEKTYFFNKK…LNSLIRIKEQ (82 aa).

Belongs to the NAD-dependent DNA ligase family. LigA subfamily. Mg(2+) is required as a cofactor. Mn(2+) serves as cofactor.

It carries out the reaction NAD(+) + (deoxyribonucleotide)n-3'-hydroxyl + 5'-phospho-(deoxyribonucleotide)m = (deoxyribonucleotide)n+m + AMP + beta-nicotinamide D-nucleotide.. Its function is as follows. DNA ligase that catalyzes the formation of phosphodiester linkages between 5'-phosphoryl and 3'-hydroxyl groups in double-stranded DNA using NAD as a coenzyme and as the energy source for the reaction. It is essential for DNA replication and repair of damaged DNA. The chain is DNA ligase from Buchnera aphidicola subsp. Acyrthosiphon pisum (strain Tuc7).